Reading from the N-terminus, the 205-residue chain is Tic20 family protein Ycf60 (205 aa).

5 helical membrane passes run 5-25 (LFVN…VILI), 54-74 (AISC…FGIV), 102-122 (LIGF…IIQI), 130-150 (IVQA…LTSL), and 163-183 (LADT…TDAL).

Belongs to the Tic20 family.

It is found in the plastid. It localises to the chloroplast membrane. This chain is Tic20 family protein Ycf60 (ycf60), found in Cyanidium caldarium (Red alga).